The primary structure comprises 253 residues: Phosphate import ATP-binding protein PstB (253 aa).

An ABC transporter domain is found at 5–248 (IETINLHVYY…PEHELTEKYV (244 aa)). Residue 37-44 (GPSGCGKS) participates in ATP binding.

Belongs to the ABC transporter superfamily. Phosphate importer (TC 3.A.1.7) family. As to quaternary structure, the complex is composed of two ATP-binding proteins (PstB), two transmembrane proteins (PstC and PstA) and a solute-binding protein (PstS).

It is found in the cell membrane. It carries out the reaction phosphate(out) + ATP + H2O = ADP + 2 phosphate(in) + H(+). Its function is as follows. Part of the ABC transporter complex PstSACB involved in phosphate import. Responsible for energy coupling to the transport system. In Pyrococcus furiosus (strain ATCC 43587 / DSM 3638 / JCM 8422 / Vc1), this protein is Phosphate import ATP-binding protein PstB.